The primary structure comprises 258 residues: 5'-nucleotidase SurE (258 aa).

Positions 14, 15, 45, and 101 each coordinate a divalent metal cation.

This sequence belongs to the SurE nucleotidase family. Requires a divalent metal cation as cofactor.

The protein resides in the cytoplasm. The enzyme catalyses a ribonucleoside 5'-phosphate + H2O = a ribonucleoside + phosphate. In terms of biological role, nucleotidase that shows phosphatase activity on nucleoside 5'-monophosphates. This is 5'-nucleotidase SurE from Chlorobium phaeobacteroides (strain DSM 266 / SMG 266 / 2430).